The following is a 264-amino-acid chain: Versicolorin reductase stcU (264 aa).

Residues Ile23, Asp69, Asn96, and Arg129 each contribute to the NADP(+) site. Residues Ser145 and Ser146 each act as proton donor in the active site. Tyr160, Lys164, Ile193, and Thr195 together coordinate NADP(+). The active-site Proton acceptor is Tyr160. Lys164 functions as the Lowers pKa of active site Tyr in the catalytic mechanism.

This sequence belongs to the short-chain dehydrogenases/reductases (SDR) family.

The enzyme catalyses (4S,8R)-2,13,16,20-tetrahydroxy-7,9-dioxapentacyclo[10.8.0.0(3,10).0(4,8).0(14,19)]icosa-1(12),2,5,10,13,16,19-heptaen-18-one + NADPH + H(+) = (4S,8R,16R)-2,13,16,20-tetrahydroxy-7,9-dioxapentacyclo[10.8.0.0(3,10).0(4,8).0(14,19)]icosa-1(12),2,5,10,13,19-hexaen-18-one + NADP(+). Its pathway is mycotoxin biosynthesis; sterigmatocystin biosynthesis. Functionally, versicolorin reductase; part of the gene cluster that mediates the biosynthesis of sterigmatocystin (ST), a polyketide-derived furanocoumarin which is part of the most toxic and carcinogenic compounds among the known mycotoxins. The first step in the biosynthesis of sterigmatocystin is the production of hexanoate by the fatty acid synthase (FAS) units stcJ and stcK. The polyketide backbone is assembled by the non-reducing polyketide synthase stcA by condensation of the starter hexanoyl-CoA and 7 malonyl-CoA extender units followed by cyclization and release of norsolorinic acid. Norsolorinic acid is the first stable intermediate in the biosynthesis of sterigmatocystin and is converted into averantin (AVN) by the ketoreductase stcE which reduces the hexanoate ketone to an alcohol. Averantin is then oxidized into 5'-hydroxyaverantin (HAVN) by the cytochrome P450 monooxygenase stcF. 5'-hydroxyaverantin is further converted to 5'-oxyaverantin (OAVN) by the 5'-hydroxyaverantin dehydrogenase stcG. The next step is the conversion of OAVN into averufin (AVF) which is catalyzed by a yet to be identified enzyme. The cytochrome P450 monooxygenase stcB and the flavin-binding monooxygenase stcW are both required for the conversion of averufin to 1-hydroxyversicolorone. The esterase stcI probably catalyzes the formation of versiconal hemiacetal acetate from 1-hydroxyversicolorone. The oxydoreductase stcN then probably catalyzes the biosynthetic step from versiconal to versicolorin B (VERB). The next step is performed by the versicolorin B desaturase stcL to produce versicolorin A (VERA). The ketoreductase stcU and the cytochrome P450 monooxygenase stcS are involved in the conversion of versicolorin A to demethylsterigmatocystin. The Baeyer-Villiger oxidas stcQ and the reductase stcR might be involved in the biosynthetic step from versicolorin A to demethylsterigmatocystin. The final step in the biosynthesis of sterigmatocystin is the methylation of demethylsterigmatocystin catalyzed by the methyltransferase stcP. This Emericella nidulans (strain FGSC A4 / ATCC 38163 / CBS 112.46 / NRRL 194 / M139) (Aspergillus nidulans) protein is Versicolorin reductase stcU.